The primary structure comprises 397 residues: Elongation factor Tu (397 aa).

The 198-residue stretch at 10-207 folds into the tr-type G domain; it reads KPHVNIGTLG…AVDNNIPDPV (198 aa). The interval 19-26 is G1; sequence GHVDHGKT. 19–26 is a binding site for GTP; sequence GHVDHGKT. T26 serves as a coordination point for Mg(2+). The tract at residues 63-67 is G2; sequence GITIN. The G3 stretch occupies residues 84 to 87; the sequence is DAPG. Residues 84–88 and 139–142 contribute to the GTP site; these read DAPGH and NKSD. The G4 stretch occupies residues 139–142; sequence NKSD. The G5 stretch occupies residues 177 to 179; sequence SGL.

It belongs to the TRAFAC class translation factor GTPase superfamily. Classic translation factor GTPase family. EF-Tu/EF-1A subfamily. In terms of assembly, monomer.

The protein localises to the cytoplasm. The catalysed reaction is GTP + H2O = GDP + phosphate + H(+). In terms of biological role, GTP hydrolase that promotes the GTP-dependent binding of aminoacyl-tRNA to the A-site of ribosomes during protein biosynthesis. This is Elongation factor Tu from Leifsonia xyli subsp. xyli (strain CTCB07).